Here is a 131-residue protein sequence, read N- to C-terminus: MSGMRKEKLQEELKKIISDILQREVKDPSVGFVTVTSVDLSGDLRHAKVFVSILGEKENQQDSLRGLEKATGFIRSELGKRVRLRHVPEIVFKFDESIEHGDHINKLLKQMNLGEDNEDNEDKENNDPGEE.

The interval 110 to 131 (QMNLGEDNEDNEDKENNDPGEE) is disordered. Over residues 115-131 (EDNEDNEDKENNDPGEE) the composition is skewed to acidic residues.

Belongs to the RbfA family. As to quaternary structure, monomer. Binds 30S ribosomal subunits, but not 50S ribosomal subunits or 70S ribosomes.

The protein localises to the cytoplasm. One of several proteins that assist in the late maturation steps of the functional core of the 30S ribosomal subunit. Associates with free 30S ribosomal subunits (but not with 30S subunits that are part of 70S ribosomes or polysomes). Required for efficient processing of 16S rRNA. May interact with the 5'-terminal helix region of 16S rRNA. The polypeptide is Ribosome-binding factor A (Natranaerobius thermophilus (strain ATCC BAA-1301 / DSM 18059 / JW/NM-WN-LF)).